Reading from the N-terminus, the 396-residue chain is uncharacterized protein (396 aa).

It belongs to the mycobacterial PPE family.

This is an uncharacterized protein from Mycobacterium tuberculosis (strain CDC 1551 / Oshkosh).